The following is a 260-amino-acid chain: DNA import protein CedA (260 aa).

The next 6 membrane-spanning stretches (helical) occupy residues 13–33 (LLASLTYFIGAAIYALPVPVY), 47–67 (IYVVVWNSIYLGVLLFLGELL), 110–130 (ALIQVVPFGALLTVITSALTF), 140–160 (IVYQYVAVFIATGVLFLSIPF), 169–189 (AFIGSGIVFYVGLPYLPQFLA), and 220–240 (IITSLVIGPVIYIFILVGFSM).

In terms of assembly, forms a complex composed of CedA, CedA1 and CedA2.

The protein resides in the cell membrane. Part of the Ced system, which is involved in DNA import. This is DNA import protein CedA from Sulfolobus acidocaldarius (strain ATCC 33909 / DSM 639 / JCM 8929 / NBRC 15157 / NCIMB 11770).